The sequence spans 588 residues: Thioredoxin domain-containing protein 3 (588 aa).

The region spanning 2–119 (ASKKREVQLQ…VINLIDEERK (118 aa)) is the Thioredoxin domain. Residues cysteine 39 and cysteine 42 are joined by a disulfide bond. 3 NDK regions span residues 157–257 (IAII…DQPE), 315–455 (LEKT…STLG), and 456–588 (LIKP…PEEN). Positions 230 to 261 (GSKHNPPSEETEPQTDTEPNERSEDQPEVEAQ) are disordered.

This sequence in the C-terminal section; belongs to the NDK family. As to quaternary structure, monomer. In terms of tissue distribution, testis-specific. Expressed only in primary spermatocytes and round spermatids.

Its subcellular location is the cytoplasm. Functionally, probably required during the final stages of sperm tail maturation in the testis and/or epididymis, where extensive disulfide bonding of fibrous sheath (FS) proteins occurs. In vitro, it has neither nucleoside diphosphate kinase (NDPK) activity nor reducing activity on disulfide bonds. Exhibits a 3'-5' exonuclease activity with a preference for single-stranded DNA, suggesting roles in DNA proofreading and repair. The polypeptide is Thioredoxin domain-containing protein 3 (Homo sapiens (Human)).